Consider the following 625-residue polypeptide: Autophagy-related protein 13b (625 aa).

2 stretches are compositionally biased toward low complexity: residues 322–332 (PSVSCSPSPTR) and 455–477 (PSGVRPSSSSSPRISFSRSSSRS). Disordered stretches follow at residues 322-388 (PSVS…AVPR), 452-527 (FRRP…YPKK), and 544-564 (PPLRQDVSESSRPEICSNNNK). Over residues 498-518 (ITDRNSRPGSFDHRGDIHEPF) the composition is skewed to basic and acidic residues.

The protein belongs to the ATG13 family. Plant subfamily.

The protein resides in the cytoplasmic vesicle. The protein localises to the autophagosome. In terms of biological role, involved in autophagy in a nutritional condition dependent manner. The ATG1-ATG13 protein kinase complex regulates downstream events required for autophagosome enclosure and/or vacuolar delivery. Becomes a target of autophagy under nutrient starvation. Connects autophagy to plant nutritional status. The sequence is that of Autophagy-related protein 13b from Arabidopsis thaliana (Mouse-ear cress).